A 291-amino-acid chain; its full sequence is Putative phosphatase MG263 (291 aa).

The Nucleophile role is filled by D11. Residue D11 coordinates Mg(2+). L12 contributes to the phosphate binding site. D13 contacts Mg(2+). Phosphate is bound by residues 60–61 (TG) and K217. D241 is a binding site for Mg(2+). Residue N244 participates in phosphate binding.

It belongs to the HAD-like hydrolase superfamily. Cof family. Mg(2+) serves as cofactor.

This is Putative phosphatase MG263 from Mycoplasma genitalium (strain ATCC 33530 / DSM 19775 / NCTC 10195 / G37) (Mycoplasmoides genitalium).